Reading from the N-terminus, the 798-residue chain is Copalyl diphosphate synthase 1, chloroplastic (798 aa).

The transit peptide at Met-1–Ala-72 directs the protein to the chloroplast. Residue Lys-251 participates in substrate binding. Asp-383 and Asp-385 together coordinate Mg(2+). The DXDD motif motif lies at Asp-383 to Asp-386. Position 469 (Lys-469) interacts with substrate.

It belongs to the terpene synthase family. Tpsc subfamily. Mg(2+) is required as a cofactor. In terms of tissue distribution, highly expressed in roots, and, at low levels, in stems and leaves.

It localises to the plastid. The protein resides in the chloroplast. It carries out the reaction (2E,6E,10E)-geranylgeranyl diphosphate = (+)-copalyl diphosphate. It functions in the pathway secondary metabolite biosynthesis; terpenoid biosynthesis. Its function is as follows. Involved in the biosynthesis of ent-kaurene diterpenoids natural products such as oridonin, miltiradiene, eriocalyxin B and nezukol, known to exhibit antitumor, anti-inflammatory and antibacterial activities. Catalyzes the conversion of (2E,6E,10E)-geranylgeranyl diphosphate (GGPP) to (+)-copalyl diphosphate ((+)-CPP). In Isodon rubescens (Rabdosia rubescens), this protein is Copalyl diphosphate synthase 1, chloroplastic.